The sequence spans 377 residues: Chaperone protein DnaJ (377 aa).

The region spanning 5–70 is the J domain; the sequence is DCYEVLGISR…QKKAAYDQYG (66 aa). The CR-type zinc-finger motif lies at 133–211; sequence GISKEIQIPT…CHGHGRYERS (79 aa). 8 residues coordinate Zn(2+): Cys-146, Cys-149, Cys-163, Cys-166, Cys-185, Cys-188, Cys-199, and Cys-202. CXXCXGXG motif repeat units follow at residues 146-153, 163-170, 185-192, and 199-206; these read CEQCNGSG, CGTCYGQG, CPTCRGQG, and CHKCHGHG.

This sequence belongs to the DnaJ family. As to quaternary structure, homodimer. Zn(2+) is required as a cofactor.

Its subcellular location is the cytoplasm. In terms of biological role, participates actively in the response to hyperosmotic and heat shock by preventing the aggregation of stress-denatured proteins and by disaggregating proteins, also in an autonomous, DnaK-independent fashion. Unfolded proteins bind initially to DnaJ; upon interaction with the DnaJ-bound protein, DnaK hydrolyzes its bound ATP, resulting in the formation of a stable complex. GrpE releases ADP from DnaK; ATP binding to DnaK triggers the release of the substrate protein, thus completing the reaction cycle. Several rounds of ATP-dependent interactions between DnaJ, DnaK and GrpE are required for fully efficient folding. Also involved, together with DnaK and GrpE, in the DNA replication of plasmids through activation of initiation proteins. The polypeptide is Chaperone protein DnaJ (Psychromonas ingrahamii (strain DSM 17664 / CCUG 51855 / 37)).